The primary structure comprises 329 residues: ADP-L-glycero-D-manno-heptose-6-epimerase (329 aa).

NADP(+)-binding positions include 10–11, 31–32, Lys38, Lys53, 74–78, and Asn91; these read FI, DD, and QGACS. Tyr138 acts as the Proton acceptor in catalysis. Lys142 provides a ligand contact to NADP(+). Residue Asn167 coordinates substrate. 2 residues coordinate NADP(+): Val168 and Lys176. Lys176 serves as the catalytic Proton acceptor. Substrate contacts are provided by residues Arg178, His185, 199–202, Arg212, and Tyr291; that span reads FAGW.

It belongs to the NAD(P)-dependent epimerase/dehydratase family. HldD subfamily. As to quaternary structure, homopentamer. NADP(+) is required as a cofactor.

The catalysed reaction is ADP-D-glycero-beta-D-manno-heptose = ADP-L-glycero-beta-D-manno-heptose. It functions in the pathway nucleotide-sugar biosynthesis; ADP-L-glycero-beta-D-manno-heptose biosynthesis; ADP-L-glycero-beta-D-manno-heptose from D-glycero-beta-D-manno-heptose 7-phosphate: step 4/4. It participates in bacterial outer membrane biogenesis; LPS core biosynthesis. In terms of biological role, catalyzes the interconversion between ADP-D-glycero-beta-D-manno-heptose and ADP-L-glycero-beta-D-manno-heptose via an epimerization at carbon 6 of the heptose. In Bordetella parapertussis (strain 12822 / ATCC BAA-587 / NCTC 13253), this protein is ADP-L-glycero-D-manno-heptose-6-epimerase.